A 58-amino-acid chain; its full sequence is Large ribosomal subunit protein uL30 (58 aa).

It belongs to the universal ribosomal protein uL30 family. Part of the 50S ribosomal subunit.

The chain is Large ribosomal subunit protein uL30 from Pelobacter propionicus (strain DSM 2379 / NBRC 103807 / OttBd1).